We begin with the raw amino-acid sequence, 420 residues long: Serine hydroxymethyltransferase (420 aa).

Residues leucine 121 and 125 to 127 (GHL) contribute to the (6S)-5,6,7,8-tetrahydrofolate site. An N6-(pyridoxal phosphate)lysine modification is found at lysine 229.

The protein belongs to the SHMT family. In terms of assembly, homodimer. Pyridoxal 5'-phosphate serves as cofactor.

The protein localises to the cytoplasm. It carries out the reaction (6R)-5,10-methylene-5,6,7,8-tetrahydrofolate + glycine + H2O = (6S)-5,6,7,8-tetrahydrofolate + L-serine. The protein operates within one-carbon metabolism; tetrahydrofolate interconversion. It participates in amino-acid biosynthesis; glycine biosynthesis; glycine from L-serine: step 1/1. Functionally, catalyzes the reversible interconversion of serine and glycine with tetrahydrofolate (THF) serving as the one-carbon carrier. This reaction serves as the major source of one-carbon groups required for the biosynthesis of purines, thymidylate, methionine, and other important biomolecules. Also exhibits THF-independent aldolase activity toward beta-hydroxyamino acids, producing glycine and aldehydes, via a retro-aldol mechanism. In Pasteurella multocida (strain Pm70), this protein is Serine hydroxymethyltransferase.